The chain runs to 254 residues: MDYLFISSKTDPASQNIKKHVQNYGYNVFELEKKSTQSNFSDFPDSEMYIFLSKHASESKKPTLTVHTPGNLTEDNSHGGNPEEISPCNPVFNTLMLQNINKYNEMEEYKELGFEVSFEVLHHGPTDLKTPSAFVEIGSSEEQWQIDDAAEIITNSLIDTLNSIQNSEYEEKEKIIGIGGGHYSPKFTKLALREEYYVGYLTPKHAKLSENILNQLISKQEFDFVGIDWKGLYGEDKRKYVEFFDENDISWQRV.

Residues 61 to 83 (KPTLTVHTPGNLTEDNSHGGNPE) form a disordered region. The segment covering 65–74 (TVHTPGNLTE) has biased composition (polar residues).

This sequence belongs to the DtdA deacylase family. As to quaternary structure, monomer. Zn(2+) serves as cofactor.

The catalysed reaction is a D-aminoacyl-tRNA + H2O = a tRNA + a D-alpha-amino acid + H(+). It catalyses the reaction glycyl-tRNA(Ala) + H2O = tRNA(Ala) + glycine + H(+). D-aminoacyl-tRNA deacylase with broad substrate specificity. By recycling D-aminoacyl-tRNA to D-amino acids and free tRNA molecules, this enzyme counteracts the toxicity associated with the formation of D-aminoacyl-tRNA entities in vivo. This chain is D-aminoacyl-tRNA deacylase, found in Methanococcus maripaludis (strain C7 / ATCC BAA-1331).